Here is a 285-residue protein sequence, read N- to C-terminus: Protease HtpX homolog (285 aa).

The next 2 membrane-spanning stretches (helical) occupy residues 7 to 27 and 30 to 50; these read TAML…MIGG and GMTI…WFSD. H131 is a binding site for Zn(2+). The active site involves E132. H135 contacts Zn(2+). 2 helical membrane passes run 146 to 166 and 177 to 197; these read ISAT…FFGG and IAGI…QMAI. E202 serves as a coordination point for Zn(2+).

The protein belongs to the peptidase M48B family. Zn(2+) is required as a cofactor.

The protein localises to the cell inner membrane. The protein is Protease HtpX homolog of Burkholderia thailandensis (strain ATCC 700388 / DSM 13276 / CCUG 48851 / CIP 106301 / E264).